The following is a 151-amino-acid chain: 3-dehydroquinate dehydratase (151 aa).

Y26 functions as the Proton acceptor in the catalytic mechanism. N75, H81, and D88 together coordinate substrate. Residue H101 is the Proton donor of the active site. Residues L102–S103 and R112 contribute to the substrate site.

It belongs to the type-II 3-dehydroquinase family. As to quaternary structure, homododecamer.

The enzyme catalyses 3-dehydroquinate = 3-dehydroshikimate + H2O. It functions in the pathway metabolic intermediate biosynthesis; chorismate biosynthesis; chorismate from D-erythrose 4-phosphate and phosphoenolpyruvate: step 3/7. Catalyzes a trans-dehydration via an enolate intermediate. The protein is 3-dehydroquinate dehydratase of Shewanella denitrificans (strain OS217 / ATCC BAA-1090 / DSM 15013).